A 246-amino-acid chain; its full sequence is Dof zinc finger protein DOF4.7 (246 aa).

Polar residues-rich tracts occupy residues 1-12 (MMTSSHQSNTTG) and 27-37 (QINNKEPSPAT). The segment at 1-39 (MMTSSHQSNTTGFKPRRIKTTAKPPRQINNKEPSPATQP) is disordered. The segment at 41-95 (LKCPRCDSVNTKFCYYNNYSLSQPRHYCKNCRRYWTRGGALRNVPIGGSTRNKNK) adopts a Dof-type zinc-finger fold. Zn(2+) contacts are provided by Cys43, Cys46, Cys68, and Cys71. The tract at residues 216 to 235 (GGATSGNHEDNDDGEGNLGN) is disordered.

In terms of assembly, interacts with ZFP2. As to expression, highly expressed at the base of all organs of the flower, especially in the abscission zone (AZ) of petals, stamens and sepals. Expressed at low levels in sepals, filaments, stigmatic papillae, tips of young siliques, and at the base of pedicels and leaf trichomes.

The protein resides in the nucleus. In terms of biological role, transcription factor that binds specifically to a 5'-AA[AG]G-3' consensus core sequence. Involved in the negative regulation of floral organ abscission by binding to the typical DOF 5'-AAAG-3' sequences in the promoter of ADPG2/PGAZAT, and by down-regulating its expression. ADPG2/PGAZAT is an abscission-related and cell wall hydrolyzing polygalacturonase. May act through the interaction with ZFP2, an abscission-related transcription factor. The protein is Dof zinc finger protein DOF4.7 of Arabidopsis thaliana (Mouse-ear cress).